A 438-amino-acid polypeptide reads, in one-letter code: Coenzyme A disulfide reductase (438 aa).

8-33 (GAVAGGATCASQIRRLDKESDIIIFE) serves as a coordination point for FAD. Substrate-binding residues include T15, Q19, R22, S39, and N42. C43 (nucleophile) is an active-site residue. C43 serves as the catalytic Redox-active. K71 contacts substrate. Residue 151–166 (VLVVGAGYVSLEVLEN) coordinates NADP(+). Position 267–277 (267–277 (TNVPNIYAIGD)) interacts with FAD. Residue H299 coordinates substrate. Position 419 (Y419) interacts with FAD. Residue K427 participates in substrate binding.

Belongs to the class-III pyridine nucleotide-disulfide oxidoreductase family. Homodimer. The cofactor is FAD.

The catalysed reaction is NADP(+) + 2 CoA = CoA-disulfide + NADPH + H(+). Catalyzes specifically the NADPH-dependent reduction of coenzyme A disulfide. The chain is Coenzyme A disulfide reductase from Staphylococcus aureus (strain MSSA476).